We begin with the raw amino-acid sequence, 237 residues long: Small ribosomal subunit protein uS2c (237 aa).

The protein belongs to the universal ribosomal protein uS2 family.

The protein resides in the plastid. The protein is Small ribosomal subunit protein uS2c (rps2) of Epifagus virginiana (Beechdrops).